The following is a 370-amino-acid chain: Protein Brevis radix-like 3 (370 aa).

Residues Lys-140–Asn-221 enclose the BRX 1 domain. Polar residues-rich tracts occupy residues Leu-231 to Lys-248 and Pro-266 to Asp-291. A disordered region spans residues Leu-231–Glu-316. In terms of domain architecture, BRX 2 spans Ser-315 to Leu-370.

This sequence belongs to the BRX family. In terms of tissue distribution, expressed in roots.

It localises to the nucleus. The polypeptide is Protein Brevis radix-like 3 (BRXL3) (Arabidopsis thaliana (Mouse-ear cress)).